Reading from the N-terminus, the 120-residue chain is Large ribosomal subunit protein eL8 (120 aa).

This sequence belongs to the eukaryotic ribosomal protein eL8 family. As to quaternary structure, part of the 50S ribosomal subunit. Probably part of the RNase P complex.

The protein resides in the cytoplasm. Functionally, multifunctional RNA-binding protein that recognizes the K-turn motif in ribosomal RNA, the RNA component of RNase P, box H/ACA, box C/D and box C'/D' sRNAs. The chain is Large ribosomal subunit protein eL8 from Haloquadratum walsbyi (strain DSM 16790 / HBSQ001).